The following is a 561-amino-acid chain: MCGIWALFGSDDCLSVQCLSAMKIAHRGPDAFRFENVNGYTNCCFGFHRLAVVDQLFGMQPIRVKKYPYLWLCYNGEIYNHKKLQHHFEFEYQTKVDGEIILHLYDKGGIEQTVCMLDGVFAFILLDTANKKVFLGRDTYGVRPLFKAMTEDGFLAVCSEAKGLVNLKHSMTPFLKVEPFLPGHYEVLDLKPNGKVASVEMVKHHHCRDEPLHALYDGVEKLFPGFEIETVKSNLRILFDNAVKKRLMTDRRIGCLLSGGLDSSLVAATLLKQLKEAQVQYPLQTFAIGMEDSPDLLAARKVANHIGSEHHEVLFNSEEGIQVLDEVIFSLETYDITTVRASVGMYLISKYIRKNTDSVVIFSGEGSDELTQGYIYFHKAPSPEKAEEESERLLRELYLFDVLRADRTTAAHGLELRVPFLDHRFSSYYLSLPPDMRVPKNGIEKHLLRETFEDSNLIPKEILWRPKEAFSDGITSVKNSWFRILQDYIEHQVDDAAMASAAQKFPINTPKTKEGYYYRQIFENHYPGRADWLPHYWMPRWTNATDPSARTLTHYKAAAKA.

Cys-2 acts as the For GATase activity in catalysis. In terms of domain architecture, Glutamine amidotransferase type-2 spans Cys-2–Lys-191. L-glutamine contacts are provided by residues Arg-49–Val-53, Asn-75–Glu-77, and Asp-97. Positions His-213–Tyr-536 constitute an Asparagine synthetase domain. Residues Leu-256, Ile-288, and Ser-363–Gly-364 contribute to the ATP site. Lys-385 carries the N6-acetyllysine modification. Thr-545 carries the post-translational modification Phosphothreonine.

The enzyme catalyses L-aspartate + L-glutamine + ATP + H2O = L-asparagine + L-glutamate + AMP + diphosphate + H(+). It functions in the pathway amino-acid biosynthesis; L-asparagine biosynthesis; L-asparagine from L-aspartate (L-Gln route): step 1/1. The polypeptide is Asparagine synthetase [glutamine-hydrolyzing] (ASNS) (Bos taurus (Bovine)).